Consider the following 338-residue polypeptide: UPF0284 protein PAE0372 (338 aa).

Belongs to the UPF0284 family.

The sequence is that of UPF0284 protein PAE0372 from Pyrobaculum aerophilum (strain ATCC 51768 / DSM 7523 / JCM 9630 / CIP 104966 / NBRC 100827 / IM2).